A 463-amino-acid polypeptide reads, in one-letter code: 4-hydroxybenzoate polyprenyltransferase, mitochondrial (463 aa).

2 disordered regions span residues 28 to 48 and 133 to 152; these read NNNT…STFN and LLDD…NNKP. Over residues 137-150 the composition is skewed to low complexity; it reads NNSNSNNNNNSNNN. Transmembrane regions (helical) follow at residues 181 to 201, 206 to 226, 257 to 277, 305 to 325, 330 to 350, 375 to 395, and 431 to 451; these read IGVW…APAG, LKTM…GCVI, LIFL…SLNY, FVLG…IAGS, IVAP…TIYA, IILS…GIAA, and FISN…SKLL.

It belongs to the UbiA prenyltransferase family. Requires Mg(2+) as cofactor.

The protein resides in the mitochondrion inner membrane. It catalyses the reaction an all-trans-polyprenyl diphosphate + 4-hydroxybenzoate = a 4-hydroxy-3-(all-trans-polyprenyl)benzoate + diphosphate. The protein operates within cofactor biosynthesis; ubiquinone biosynthesis. Catalyzes the prenylation of para-hydroxybenzoate (PHB) with an all-trans polyprenyl group. Mediates the second step in the final reaction sequence of coenzyme Q (CoQ) biosynthesis, which is the condensation of the polyisoprenoid side chain with PHB. Functionally, catalyzes the prenylation of para-hydroxybenzoate (PHB) with an all-trans polyprenyl group. Mediates the second step in the final reaction sequence of coenzyme Q (CoQ) biosynthesis, which is the condensation of the polyisoprenoid side chain with PHB, generating the first membrane-bound Q intermediate. The polypeptide is 4-hydroxybenzoate polyprenyltransferase, mitochondrial (Dictyostelium discoideum (Social amoeba)).